A 274-amino-acid chain; its full sequence is 2,3,4,5-tetrahydropyridine-2,6-dicarboxylate N-succinyltransferase (274 aa).

Belongs to the transferase hexapeptide repeat family.

The protein resides in the cytoplasm. The catalysed reaction is (S)-2,3,4,5-tetrahydrodipicolinate + succinyl-CoA + H2O = (S)-2-succinylamino-6-oxoheptanedioate + CoA. It functions in the pathway amino-acid biosynthesis; L-lysine biosynthesis via DAP pathway; LL-2,6-diaminopimelate from (S)-tetrahydrodipicolinate (succinylase route): step 1/3. This is 2,3,4,5-tetrahydropyridine-2,6-dicarboxylate N-succinyltransferase from Klebsiella pneumoniae (strain 342).